Reading from the N-terminus, the 210-residue chain is Type III pantothenate kinase (210 aa).

5-12 (DIGNTYLH) is a binding site for ATP. Residues tyrosine 69 and 73-76 (GVDR) each bind substrate. Residue aspartate 75 is the Proton acceptor of the active site. Position 90 (aspartate 90) interacts with K(+). Residue serine 93 coordinates ATP. Residue threonine 145 coordinates substrate.

Belongs to the type III pantothenate kinase family. As to quaternary structure, homodimer. NH4(+) is required as a cofactor. It depends on K(+) as a cofactor.

It is found in the cytoplasm. It carries out the reaction (R)-pantothenate + ATP = (R)-4'-phosphopantothenate + ADP + H(+). Its pathway is cofactor biosynthesis; coenzyme A biosynthesis; CoA from (R)-pantothenate: step 1/5. Catalyzes the phosphorylation of pantothenate (Pan), the first step in CoA biosynthesis. In Wolinella succinogenes (strain ATCC 29543 / DSM 1740 / CCUG 13145 / JCM 31913 / LMG 7466 / NCTC 11488 / FDC 602W) (Vibrio succinogenes), this protein is Type III pantothenate kinase.